The chain runs to 403 residues: G2/mitotic-specific cyclin-B3 (403 aa).

2 disordered regions span residues 1–86 and 102–122; these read MPVA…APPA and RKTP…PEEP. The segment covering 7–25 has biased composition (polar residues); it reads SKAQSSKQPRASKAPSVTE. A D-box motif is present at residues 51–59; sequence RSAFGDITN.

The protein belongs to the cyclin family. Cyclin AB subfamily. Interacts with the CDK1 and CDK2 protein kinases. Ubiquitinated, leading to its degradation.

The protein localises to the nucleus. Cyclins are positive regulatory subunits of the cyclin-dependent kinases (CDKs), and thereby play an essential role in the control of the cell cycle, notably via their destruction during cell division. Could be involved at the G2/M (mitosis or meiosis) transition. G2/M cyclins accumulate steadily during G2 and are abruptly destroyed at mitosis. The protein is G2/mitotic-specific cyclin-B3 (CCNB3) of Gallus gallus (Chicken).